Reading from the N-terminus, the 252-residue chain is Accessory gland protein Acp32CD (252 aa).

An N-terminal signal peptide occupies residues 1 to 19 (MWRMRMRLLTGYLVLLALG). The interval 42–252 (PDGEGGTGVD…GAKEDDYEEM (211 aa)) is disordered. Residues 44 to 69 (GEGGTGVDGGGGGAGGGAAGPGGGTG) show a composition bias toward gly residues. 4 stretches are compositionally biased toward basic and acidic residues: residues 104 to 122 (AIGKKESGGGSDGKSDSKD), 142 to 153 (SDSKDAKDRQDK), 159 to 171 (QEGKRTDHSHHSS), and 209 to 225 (NGARESSQENQDAKEVA).

In terms of tissue distribution, seminal fluid.

It localises to the secreted. In terms of biological role, responsible for physiological and behavioral changes in mated female flies. The chain is Accessory gland protein Acp32CD (Acp32CD) from Drosophila melanogaster (Fruit fly).